We begin with the raw amino-acid sequence, 469 residues long: GDP-fucose protein O-fucosyltransferase 2 (469 aa).

An N-terminal signal peptide occupies residues 1–18 (MKFIIVLLLFFFFKVIDR). Residues 56-60 (GEGFN), 277-279 (HLR), and 373-374 (RF) contribute to the GDP-beta-L-fucose site. The active-site Proton acceptor is the Glu-57.

The protein belongs to the glycosyltransferase 68 family.

It localises to the endoplasmic reticulum. The enzyme catalyses L-seryl-[protein] + GDP-beta-L-fucose = 3-O-(alpha-L-fucosyl)-L-seryl-[protein] + GDP + H(+). It catalyses the reaction L-threonyl-[protein] + GDP-beta-L-fucose = 3-O-(alpha-L-fucosyl)-L-threonyl-[protein] + GDP + H(+). The protein operates within protein modification; protein glycosylation. Functionally, catalyzes the reaction that attaches fucose through an O-glycosidic linkage to a conserved serine or threonine residue in the consensus sequence C1-X-X-S/T-C2 of thrombospondin type I repeats (TSRs) where C1 and C2 are the first and second cysteines of the repeat, respectively. O-fucosylates sporozoite proteins CSP and TRAP. O-fucosylation regulates stability and intracellular trafficking of TRAP but not of CSP. Probably by regulating protein O-fucosylation, may play a role in parasite transmission to the mosquito vector and/or infection of the vertebrate host hepatocytes; however, POFUT2 involvement in transmission/infection is controversial. The sequence is that of GDP-fucose protein O-fucosyltransferase 2 from Plasmodium falciparum (isolate NF54).